Consider the following 274-residue polypeptide: 3-methyl-2-oxobutanoate hydroxymethyltransferase (274 aa).

2 residues coordinate Mg(2+): aspartate 44 and aspartate 83. Residues 44-45 (DS), aspartate 83, and lysine 113 each bind 3-methyl-2-oxobutanoate. Glutamate 115 serves as a coordination point for Mg(2+). Catalysis depends on glutamate 182, which acts as the Proton acceptor.

The protein belongs to the PanB family. As to quaternary structure, homodecamer; pentamer of dimers. Requires Mg(2+) as cofactor.

Its subcellular location is the cytoplasm. It carries out the reaction 3-methyl-2-oxobutanoate + (6R)-5,10-methylene-5,6,7,8-tetrahydrofolate + H2O = 2-dehydropantoate + (6S)-5,6,7,8-tetrahydrofolate. It functions in the pathway cofactor biosynthesis; (R)-pantothenate biosynthesis; (R)-pantoate from 3-methyl-2-oxobutanoate: step 1/2. Its function is as follows. Catalyzes the reversible reaction in which hydroxymethyl group from 5,10-methylenetetrahydrofolate is transferred onto alpha-ketoisovalerate to form ketopantoate. The polypeptide is 3-methyl-2-oxobutanoate hydroxymethyltransferase (Campylobacter jejuni subsp. doylei (strain ATCC BAA-1458 / RM4099 / 269.97)).